Reading from the N-terminus, the 100-residue chain is Transcription and mRNA export factor SUS1 (100 aa).

The protein belongs to the ENY2 family. In terms of assembly, component of the nuclear pore complex (NPC)-associated TREX-2 complex (transcription and export complex 2), composed of at least SUS1, SAC3, THP1, SEM1, and CDC31. TREX-2 contains 2 SUS1 chains. The TREX-2 complex interacts with the nucleoporin NUP1. Component of the 1.8 MDa SAGA transcription coactivator-HAT complex. SAGA is built of 5 distinct domains with specialized functions. Within the SAGA complex, SUS1, SGF11, SGF73 and UBP8 form an additional subcomplex of SAGA called the DUB module (deubiquitination module). Interacts directly with THP1, SAC3, SGF11, and with the RNA polymerase II.

The protein resides in the nucleus. Its subcellular location is the nucleoplasm. The protein localises to the cytoplasm. It localises to the P-body. In terms of biological role, involved in mRNA export coupled transcription activation by association with both the TREX-2 and the SAGA complexes. At the promoters, SAGA is required for recruitment of the basal transcription machinery. It influences RNA polymerase II transcriptional activity through different activities such as TBP interaction and promoter selectivity, interaction with transcription activators, and chromatin modification through histone acetylation and deubiquitination. Within the SAGA complex, participates in a subcomplex required for deubiquitination of H2B and for the maintenance of steady-state H3 methylation levels. The TREX-2 complex functions in docking export-competent ribonucleoprotein particles (mRNPs) to the nuclear entrance of the nuclear pore complex (nuclear basket). TREX-2 participates in mRNA export and accurate chromatin positioning in the nucleus by tethering genes to the nuclear periphery. May also be involved in cytoplasmic mRNA decay by interaction with components of P-bodies. In Cryptococcus neoformans var. neoformans serotype D (strain B-3501A) (Filobasidiella neoformans), this protein is Transcription and mRNA export factor SUS1.